Consider the following 1519-residue polypeptide: DNA (cytosine-5)-methyltransferase 4 (1519 aa).

A compositionally biased stretch (basic and acidic residues) spans 1 to 24 (MEMETKAGKQKKRSVDSDDDVSKE). Residues 1–31 (MEMETKAGKQKKRSVDSDDDVSKERRPKRAA) are disordered. K583 participates in a covalent cross-link: Glycyl lysine isopeptide (Lys-Gly) (interchain with G-Cter in ubiquitin). A disordered region spans residues 641–668 (ENVEEEELEEVEEEDENEEDDPEENELE). The segment covering 642-668 (NVEEEELEEVEEEDENEEDDPEENELE) has biased composition (acidic residues). BAH domains lie at 715-849 (DVVV…FSLP) and 916-1033 (TTLK…KQFP). The 435-residue stretch at 1078-1512 (LATLDIFAGC…RKLKEALYLK (435 aa)) folds into the SAM-dependent MTase C5-type domain. C1183 is an active-site residue.

Belongs to the class I-like SAM-binding methyltransferase superfamily. C5-methyltransferase family. Expressed at low levels in vegetative and floral organs.

Its subcellular location is the nucleus. It catalyses the reaction a 2'-deoxycytidine in DNA + S-adenosyl-L-methionine = a 5-methyl-2'-deoxycytidine in DNA + S-adenosyl-L-homocysteine + H(+). Its function is as follows. Maintains chromatin CpG methylation that plays a role in genomic imprinting, regulation of embryogenesis and seed viability. Required for proper patterns of CG DNA methylation in dividing cells. The chain is DNA (cytosine-5)-methyltransferase 4 (MET4) from Arabidopsis thaliana (Mouse-ear cress).